The chain runs to 334 residues: Leucine-rich repeat-containing protein 26 (334 aa).

The first 30 residues, 1–30 (MRGSFFSRLPPQLSLLLLLLLLLSWRRVWT), serve as a signal peptide directing secretion. Residues 31–265 (QEHIGTDPSK…QCTQSLAARD (235 aa)) lie on the Extracellular side of the membrane. The LRRNT domain maps to 38-75 (PSKSPVAPVCPEACSCSPGGKANCSALALPAVPAGLSW). Disulfide bonds link cysteine 47–cysteine 53 and cysteine 51–cysteine 61. LRR repeat units follow at residues 76–97 (QVRS…AFAD), 100–121 (ALLY…AFWG), 124–145 (VLQR…TFTP), 148–169 (ALSF…ILGP), and 172–194 (LLRV…LNSL). An LRRCT domain is found at 205–259 (NPWACSCALRPLCTWLRKHPRPTSETETLLCVSPKLQTLNLLTDFPDNAFKQCTQ). 2 disulfide bridges follow: cysteine 209/cysteine 235 and cysteine 211/cysteine 257. The helical transmembrane segment at 266 to 286 (LAVVYALGPASFLASLAICLA) threads the bilayer. Residues 287-334 (LGSVLTACGARRRRRRTTVRHLIRRQPDPEGPASLEDVGSPTTTAIQA) are Cytoplasmic-facing. Positions 312-334 (QPDPEGPASLEDVGSPTTTAIQA) are disordered.

As to quaternary structure, interacts with KCNMA1.

The protein localises to the cell membrane. The protein resides in the cytoplasm. Its subcellular location is the cytoskeleton. Auxiliary protein of the large-conductance, voltage and calcium-activated potassium channel (BK alpha). Required for the conversion of BK alpha channels from a high-voltage to a low-voltage activated channel type in non-excitable cells. These are characterized by negative membrane voltages and constant low levels of calcium. The sequence is that of Leucine-rich repeat-containing protein 26 (Lrrc26) from Rattus norvegicus (Rat).